The sequence spans 451 residues: Phosphoglucosamine mutase (451 aa).

Residue serine 102 is the Phosphoserine intermediate of the active site. The Mg(2+) site is built by serine 102, aspartate 243, aspartate 245, and aspartate 247. Serine 102 is modified (phosphoserine).

It belongs to the phosphohexose mutase family. Mg(2+) serves as cofactor. In terms of processing, activated by phosphorylation.

It carries out the reaction alpha-D-glucosamine 1-phosphate = D-glucosamine 6-phosphate. In terms of biological role, catalyzes the conversion of glucosamine-6-phosphate to glucosamine-1-phosphate. The polypeptide is Phosphoglucosamine mutase (Paramagnetospirillum magneticum (strain ATCC 700264 / AMB-1) (Magnetospirillum magneticum)).